A 311-amino-acid chain; its full sequence is tRNA-cytidine(32) 2-sulfurtransferase (311 aa).

Residues 47–52 (SGGKDS) carry the PP-loop motif motif. The [4Fe-4S] cluster site is built by C122, C125, and C213.

The protein belongs to the TtcA family. As to quaternary structure, homodimer. Mg(2+) serves as cofactor. It depends on [4Fe-4S] cluster as a cofactor.

The protein localises to the cytoplasm. The catalysed reaction is cytidine(32) in tRNA + S-sulfanyl-L-cysteinyl-[cysteine desulfurase] + AH2 + ATP = 2-thiocytidine(32) in tRNA + L-cysteinyl-[cysteine desulfurase] + A + AMP + diphosphate + H(+). It functions in the pathway tRNA modification. In terms of biological role, catalyzes the ATP-dependent 2-thiolation of cytidine in position 32 of tRNA, to form 2-thiocytidine (s(2)C32). The sulfur atoms are provided by the cysteine/cysteine desulfurase (IscS) system. The protein is tRNA-cytidine(32) 2-sulfurtransferase of Escherichia fergusonii (strain ATCC 35469 / DSM 13698 / CCUG 18766 / IAM 14443 / JCM 21226 / LMG 7866 / NBRC 102419 / NCTC 12128 / CDC 0568-73).